The primary structure comprises 283 residues: Extracellular metalloprotease MGG_08041 (283 aa).

The signal sequence occupies residues 1–22; that stretch reads MQINVVKTFLFALAASSVSALA. N-linked (GlcNAc...) asparagine glycosylation is present at N55. H197 is a binding site for Zn(2+). Residue E198 is part of the active site. H201 serves as a coordination point for Zn(2+). A disulfide bridge connects residues C233 and C260.

Belongs to the peptidase M43B family.

It localises to the secreted. In terms of biological role, secreted metalloproteinase that allows assimilation of proteinaceous substrates. The protein is Extracellular metalloprotease MGG_08041 of Pyricularia oryzae (strain 70-15 / ATCC MYA-4617 / FGSC 8958) (Rice blast fungus).